The chain runs to 592 residues: Polyadenylate-binding protein, cytoplasmic and nuclear (592 aa).

Positions 1–10 are enriched in basic and acidic residues; it reads MSDITEKTAE. The interval 1–43 is disordered; sequence MSDITEKTAEQLENLQINDDQQPAQSASAPSTSASESEASSVS. Residues 11-20 show a composition bias toward polar residues; it reads QLENLQINDD. The segment covering 21 to 43 has biased composition (low complexity); the sequence is QQPAQSASAPSTSASESEASSVS. 4 RRM domains span residues 50–128, 138–215, 231–308, and 334–411; these read ASLY…WSER, GNIF…MHVP, TNIY…RAQK, and VNLF…IAQR. Positions 507 to 586 constitute a PABC domain; the sequence is NQFPRHQQQH…ALAAYENFKK (80 aa).

The protein belongs to the polyadenylate-binding protein type-1 family.

It is found in the cytoplasm. The protein resides in the nucleus. In terms of biological role, binds the poly(A) tail of mRNA. Appears to be an important mediator of the multiple roles of the poly(A) tail in mRNA biogenesis, stability and translation. In the nucleus, involved in both mRNA cleavage and polyadenylation. Is also required for efficient mRNA export to the cytoplasm. Acts in concert with a poly(A)-specific nuclease (PAN) to affect poly(A) tail shortening, which may occur concomitantly with either nucleocytoplasmic mRNA transport or translational initiation. In the cytoplasm, stimulates translation initiation and regulates mRNA decay through translation termination-coupled poly(A) shortening, probably mediated by PAN. This chain is Polyadenylate-binding protein, cytoplasmic and nuclear (PAB1), found in Kluyveromyces lactis (strain ATCC 8585 / CBS 2359 / DSM 70799 / NBRC 1267 / NRRL Y-1140 / WM37) (Yeast).